The following is a 24-amino-acid chain: Humanin-like 9 (24 aa).

The protein belongs to the humanin family. In terms of tissue distribution, highly expressed in the kidney, heart muscle and testis.

The protein localises to the secreted. It localises to the cytoplasm. Plays a role as a neuroprotective and antiapoptotic factor. The sequence is that of Humanin-like 9 from Homo sapiens (Human).